Here is a 356-residue protein sequence, read N- to C-terminus: 3-isopropylmalate dehydrogenase (356 aa).

Residues arginine 95, arginine 105, arginine 133, and aspartate 223 each coordinate substrate. Mg(2+)-binding residues include aspartate 223, aspartate 247, and aspartate 251. 281 to 293 provides a ligand contact to NAD(+); that stretch reads GSAPDIAGQNKAN.

Belongs to the isocitrate and isopropylmalate dehydrogenases family. LeuB type 1 subfamily. Homodimer. The cofactor is Mg(2+). It depends on Mn(2+) as a cofactor.

It localises to the cytoplasm. It carries out the reaction (2R,3S)-3-isopropylmalate + NAD(+) = 4-methyl-2-oxopentanoate + CO2 + NADH. It functions in the pathway amino-acid biosynthesis; L-leucine biosynthesis; L-leucine from 3-methyl-2-oxobutanoate: step 3/4. Catalyzes the oxidation of 3-carboxy-2-hydroxy-4-methylpentanoate (3-isopropylmalate) to 3-carboxy-4-methyl-2-oxopentanoate. The product decarboxylates to 4-methyl-2 oxopentanoate. The chain is 3-isopropylmalate dehydrogenase from Neisseria meningitidis serogroup A / serotype 4A (strain DSM 15465 / Z2491).